The primary structure comprises 271 residues: Putative cysteine protease YopT-like blr2140 (271 aa).

The disordered stretch occupies residues 1-81 (MYDRIGGSST…STSSPESPAT (81 aa)). Residues 7–29 (GSSTRTSQTDEPSQSVDSGSFTE) are compositionally biased toward polar residues. A compositionally biased stretch (low complexity) spans 65–81 (TSSASEPSTSSPESPAT). The active site involves Cys100. The disordered stretch occupies residues 114 to 136 (SPSTRMSALTPGSQTHASAAERQ). Catalysis depends on residues His213 and Asp228.

Belongs to the peptidase C58 family.

Its function is as follows. Potential cysteine protease, which may play a central role after invasion of host cell. This is Putative cysteine protease YopT-like blr2140 from Bradyrhizobium diazoefficiens (strain JCM 10833 / BCRC 13528 / IAM 13628 / NBRC 14792 / USDA 110).